A 204-amino-acid polypeptide reads, in one-letter code: MQQAITQQEKAQPKSVLPNRPEEVWSYIKALETRTVPVDNNPASVEQNMRLTEEQRQVLIQIERDQKAADEARKLAEQQRIEDATRTQSKTTEDMKNTEAEIVKSESIKKQDSQKIESAKKVEQIKTVNNVRDSKKFGLQCGAFKNRAQAENLQGRLQMTGLNAQIQTNGEWNRVRVASFDTRELAVQAQSRAKTVTDCVVIGM.

A compositionally biased stretch (polar residues) spans 1 to 10; sequence MQQAITQQEK. Disordered regions lie at residues 1 to 20 and 70 to 99; these read MQQA…LPNR and DEAR…KNTE. Positions 131 to 204 constitute an SPOR domain; the sequence is VRDSKKFGLQ…TVTDCVVIGM (74 aa).

It to E.coli FtsN repeat regions.

This is an uncharacterized protein from Haemophilus influenzae (strain ATCC 51907 / DSM 11121 / KW20 / Rd).